Consider the following 264-residue polypeptide: Transcription initiation factor TFIID subunit 9 (264 aa).

N6-acetyllysine is present on Lys5. A phosphoserine mark is found at Ser149, Ser152, Ser155, and Ser158. The segment at 150–174 (VGSVSSRPSTPTLGTPTPQAMSVST) is disordered. Over residues 151–174 (GSVSSRPSTPTLGTPTPQAMSVST) the composition is skewed to polar residues. 4 positions are modified to phosphothreonine: Thr159, Thr161, Thr164, and Thr178. 2 positions are modified to phosphoserine: Ser181 and Ser196. The tract at residues 233–264 (QNTANESANALKRKREEEDDDDDDDDDDYDNL) is disordered. Over residues 249–264 (EEDDDDDDDDDDYDNL) the composition is skewed to acidic residues.

This sequence belongs to the TAF9 family. Component of the TFIID basal transcription factor complex, composed of TATA-box-binding protein TBP, and a number of TBP-associated factors (TAFs), including TAF1, TAF2, TAF3, TAF4, TAF5, TAF6, TAF7, TAF8, TAF9, TAF10, TAF11, TAF12 and TAF13. Component of the TATA-binding protein-free TAF complex (TFTC), the PCAF histone acetylase complex and the STAGA transcription coactivator-HAT complex. The PCAF complex consists at least of TADA2L/ADA2, SUPT3H/SPT3, TADA3L/ADA3, TAF5L/PAF65-beta, TAF6L/PAF65-alpha, TAF10/TAFII30, TAF12/TAFII20, TAF9/TAFII31 and TRRAP. The STAGA transcription coactivator-HAT complex consists at least of SUPT3H, GCN5L2, SUPT7L, TAF5L, TAF6L, TADA3L, TAD1L, TAF10, TAF12, TRRAP and TAF9. Binds N-terminal domain of p53/TP53 which is essential for transcription. Component of some MLL1/MLL complex, at least composed of the core components KMT2A/MLL1, ASH2L, HCFC1/HCF1, WDR5 and RBBP5, as well as the facultative components BACC1, CHD8, E2F6, HSP70, INO80C, KANSL1, LAS1L, MAX, MCRS1, MGA, MYST1/MOF, PELP1, PHF20, PRP31, RING2, RUVB1/TIP49A, RUVB2/TIP49B, SENP3, TAF1, TAF4, TAF6, TAF7, TAF9 and TEX10. Binds TFIIB and the Herpes simplex virus activator VP16. Forms a heterodimer with TAF6 in a complex with the TAF4B-TAF12 heterodimer. Also interacts with TAF5. Binds directly DNA. Increased DNA binding when complexed with TAF6.

Its subcellular location is the nucleus. Functionally, the TFIID basal transcription factor complex plays a major role in the initiation of RNA polymerase II (Pol II)-dependent transcription. TFIID recognizes and binds promoters with or without a TATA box via its subunit TBP, a TATA-box-binding protein, and promotes assembly of the pre-initiation complex (PIC). The TFIID complex consists of TBP and TBP-associated factors (TAFs), including TAF1, TAF2, TAF3, TAF4, TAF5, TAF6, TAF7, TAF8, TAF9, TAF10, TAF11, TAF12 and TAF13. TAF9 is also a component of the TBP-free TAFII complex (TFTC), the PCAF histone acetylase complex and the STAGA transcription coactivator-HAT complex. TAF9 and its paralog TAF9B are involved in transcriptional activation as well as repression of distinct but overlapping sets of genes. Essential for cell viability. May have a role in gene regulation associated with apoptosis. In Rattus norvegicus (Rat), this protein is Transcription initiation factor TFIID subunit 9.